Consider the following 599-residue polypeptide: mRNA export factor MEX67 (599 aa).

The residue at position 2 (Ser2) is an N-acetylserine. LRR repeat units lie at residues 163-184 (IVES…STLA) and 189-210 (NLKN…EVWK). Residues 224–262 (NPITTDKLYRTEMLRLFPKLVVLDNVIVRDEQKLQTVYS) enclose the LRRCT domain. Positions 280-467 (SSTDFATNFL…VIIASDLLTV (188 aa)) constitute an NTF2 domain. Residues 408–439 (KPELESNKKTGKNNYQKNRRYNHGYNSTSNNK) form a disordered region. The TAP-C domain maps to 546-599 (PVQLELLNKLHLETKLNAEYTFMLAEQSNWNYEVAIKGFQSSMNGIPREAFVQF).

The protein belongs to the NXF family. In terms of assembly, interacts with nucleoporin complex NUP84 and MTR2. Interacts with MIP6.

The protein localises to the nucleus. It is found in the cytoplasm. Its function is as follows. Involved in the export of mRNA from the nucleus to the cytoplasm. This Saccharomyces cerevisiae (strain ATCC 204508 / S288c) (Baker's yeast) protein is mRNA export factor MEX67 (MEX67).